We begin with the raw amino-acid sequence, 518 residues long: Gypsy retrotransposon integrase-like protein 1 (518 aa).

Residues 135–293 (VVGNPWSVVT…PYFQMFNRNP (159 aa)) enclose the Integrase catalytic domain. Positions 326-348 (NQTPAAGQMESSTSEELSKSKVA) are disordered. At Ser-498 the chain carries Phosphoserine.

The chain is Gypsy retrotransposon integrase-like protein 1 (GIN1) from Rattus norvegicus (Rat).